The following is a 571-amino-acid chain: Urease subunit alpha (571 aa).

A Urease domain is found at 133 to 571 (GGIDTHIHFI…LPLAQRYFLF (439 aa)). The Ni(2+) site is built by His138, His140, and Lys221. Lys221 is subject to N6-carboxylysine. A substrate-binding site is contributed by His223. The Ni(2+) site is built by His250 and His276. The active-site Proton donor is His324. Asp364 serves as a coordination point for Ni(2+).

This sequence belongs to the metallo-dependent hydrolases superfamily. Urease alpha subunit family. As to quaternary structure, heterotrimer of UreA (gamma), UreB (beta) and UreC (alpha) subunits. Three heterotrimers associate to form the active enzyme. Ni cation is required as a cofactor. In terms of processing, carboxylation allows a single lysine to coordinate two nickel ions.

Its subcellular location is the cytoplasm. The catalysed reaction is urea + 2 H2O + H(+) = hydrogencarbonate + 2 NH4(+). It functions in the pathway nitrogen metabolism; urea degradation; CO(2) and NH(3) from urea (urease route): step 1/1. This Corynebacterium efficiens (strain DSM 44549 / YS-314 / AJ 12310 / JCM 11189 / NBRC 100395) protein is Urease subunit alpha.